A 163-amino-acid polypeptide reads, in one-letter code: ECF RNA polymerase sigma factor SigM (163 aa).

Positions 30–43 (DLLQETFMRAYIHI) match the Polymerase core binding motif. The segment at residues 127–146 (YKEASHIMNISEANFKSVLF) is a DNA-binding region (H-T-H motif).

This sequence belongs to the sigma-70 factor family. ECF subfamily. Interacts with the N-terminus of YhdL, which is probably its anti-sigma factor. Interacts transiently with the RNAP core.

Its function is as follows. Sigma factors are initiation factors that promote the attachment of RNA polymerase (RNAP) to specific initiation sites and are then released. Extracytoplasmic function (ECF) sigma factors are held in an inactive form by a cognate anti-sigma factor (YhdL) until released. This sigma factor is involved in the maintenance of membrane and cell wall integrity in response to environmental stresses including salt, acid, ethanol and antibiotics stress. Partially regulates transcription from a number of genes including disA. Associates with RNAP core under all growth phases. This chain is ECF RNA polymerase sigma factor SigM (sigM), found in Bacillus subtilis (strain 168).